The following is a 192-amino-acid chain: UPF0149 protein VP2588 (192 aa).

Belongs to the UPF0149 family.

The sequence is that of UPF0149 protein VP2588 from Vibrio parahaemolyticus serotype O3:K6 (strain RIMD 2210633).